Reading from the N-terminus, the 425-residue chain is UDP-N-acetylglucosamine 1-carboxyvinyltransferase (425 aa).

A phosphoenolpyruvate-binding site is contributed by 22-23 (KN). A UDP-N-acetyl-alpha-D-glucosamine-binding site is contributed by Arg-93. Asp-117 serves as the catalytic Proton donor. UDP-N-acetyl-alpha-D-glucosamine-binding residues include Asp-312 and Met-334.

Belongs to the EPSP synthase family. MurA subfamily.

The protein localises to the cytoplasm. The catalysed reaction is phosphoenolpyruvate + UDP-N-acetyl-alpha-D-glucosamine = UDP-N-acetyl-3-O-(1-carboxyvinyl)-alpha-D-glucosamine + phosphate. It functions in the pathway cell wall biogenesis; peptidoglycan biosynthesis. In terms of biological role, cell wall formation. Adds enolpyruvyl to UDP-N-acetylglucosamine. This Treponema pallidum (strain Nichols) protein is UDP-N-acetylglucosamine 1-carboxyvinyltransferase.